A 360-amino-acid chain; its full sequence is DNA replication and repair protein RecF (360 aa).

Residue 30 to 37 (GQNGSGKT) participates in ATP binding.

Belongs to the RecF family.

The protein localises to the cytoplasm. Its function is as follows. The RecF protein is involved in DNA metabolism; it is required for DNA replication and normal SOS inducibility. RecF binds preferentially to single-stranded, linear DNA. It also seems to bind ATP. This chain is DNA replication and repair protein RecF, found in Shewanella sp. (strain MR-4).